Here is an 81-residue protein sequence, read N- to C-terminus: Elsinochrome C biosynthesis cluster protein SNOG_08613 (81 aa).

Its function is as follows. Part of the gene cluster that mediates the biosynthesis of elsinochrome C, a perelyenequinone phytotoxin structurally similar to cercosporin. The first step of elsinochrome C biosynthesis is performed by the polyketide synthase elcA which catalyzes the formation of nor-toralactone. The starter unit acyltransferase (SAT) domain of elcA initiates polyketide extension by the selective utilization of acetyl-CoA, which is elongated to the heptaketide in the beta-ketoacyl synthase (KS) domain by successive condensations with six malonyl units introduced by the malonyl acyltransferase (MAT) domain. The product template (PT) domain catalyzes C4-C9 and C2-C11 aldol cyclizations and dehydrations to a trihydroxynaphthalene, which is thought to be delivered to the thioesterase (TE) domain for product release. The bifunctional enzyme elcB then methylates nor-toralactone to toralactone before conducting an unusual oxidative aromatic ring opening. The next step in perylenequinone biosynthesis is an O-methylation at the nascent OH-6 of the elcB product performed by the O-methyltransferase elcD. The oxidative coupling of the two monomeric naphthol units in perylenequinone biosynthesis is catalyzed by the FAD-dependent monooxygenase elcE and the multicopper oxidase elcG. ElcG might catalyze the first intermolecular coupling in a regio- and stereo-selective manner via a phenol radical coupling mechanism and the elcE could forge the second C-C bond intramolecularly via a hydride transfer mechanism. The fasciclin domain-containing protein elcF might also play a role duting this step. The last piece of the puzzle in the biosynthesis of elsinochrome C is the additional annulation by enolate coupling to afford the dihydrobenzo(ghi)perylenequinone system, catalyzed by the FAD-dependent monooxygenase elcH. The protein is Elsinochrome C biosynthesis cluster protein SNOG_08613 of Phaeosphaeria nodorum (strain SN15 / ATCC MYA-4574 / FGSC 10173) (Glume blotch fungus).